The following is a 179-amino-acid chain: Large ribosomal subunit protein uL5 (179 aa).

Belongs to the universal ribosomal protein uL5 family. Part of the 50S ribosomal subunit; part of the 5S rRNA/L5/L18/L25 subcomplex. Contacts the 5S rRNA and the P site tRNA. Forms a bridge to the 30S subunit in the 70S ribosome.

In terms of biological role, this is one of the proteins that bind and probably mediate the attachment of the 5S RNA into the large ribosomal subunit, where it forms part of the central protuberance. In the 70S ribosome it contacts protein S13 of the 30S subunit (bridge B1b), connecting the 2 subunits; this bridge is implicated in subunit movement. Contacts the P site tRNA; the 5S rRNA and some of its associated proteins might help stabilize positioning of ribosome-bound tRNAs. The sequence is that of Large ribosomal subunit protein uL5 from Staphylococcus saprophyticus subsp. saprophyticus (strain ATCC 15305 / DSM 20229 / NCIMB 8711 / NCTC 7292 / S-41).